We begin with the raw amino-acid sequence, 189 residues long: Testis-expressed protein 22 (189 aa).

Residues 1 to 120 (MDSRQQRPQR…TQSVPTPPLQ (120 aa)) are disordered. The span at 14–24 (QWQLAQEQRQQ) shows a compositional bias: low complexity. Over residues 70-87 (IDERRRLALQRMQERTDT) the composition is skewed to basic and acidic residues. Over residues 103–114 (QQTETSPSTQSV) the composition is skewed to low complexity.

As to expression, mainly expressed in spermatocytes and spermatids in testis.

It localises to the cytoplasm. It is found in the cytoplasmic vesicle. The protein resides in the secretory vesicle. The protein localises to the acrosome. This is Testis-expressed protein 22 (Tex22) from Mus musculus (Mouse).